Here is a 250-residue protein sequence, read N- to C-terminus: 3-deoxy-manno-octulosonate cytidylyltransferase (250 aa).

This sequence belongs to the KdsB family.

It is found in the cytoplasm. It catalyses the reaction 3-deoxy-alpha-D-manno-oct-2-ulosonate + CTP = CMP-3-deoxy-beta-D-manno-octulosonate + diphosphate. It participates in nucleotide-sugar biosynthesis; CMP-3-deoxy-D-manno-octulosonate biosynthesis; CMP-3-deoxy-D-manno-octulosonate from 3-deoxy-D-manno-octulosonate and CTP: step 1/1. It functions in the pathway bacterial outer membrane biogenesis; lipopolysaccharide biosynthesis. In terms of biological role, activates KDO (a required 8-carbon sugar) for incorporation into bacterial lipopolysaccharide in Gram-negative bacteria. The sequence is that of 3-deoxy-manno-octulosonate cytidylyltransferase from Pectobacterium carotovorum subsp. carotovorum (strain PC1).